Reading from the N-terminus, the 221-residue chain is MTTQLRVVHLLPLLLACFVQTSPKQETMKMDCHKDEKGTIYDYEAIALNKNEYVPFKQYVGKHILFVNVATYCGLTAQYPELNALQEELKPYGLVVLGFPCNQFGKQEPGDNKEILPGLKYVRPGGGFVPNFQLFEKGDVNGEKEQKVFSFLKHSCPHPSEILGTFKSISWDPVKVHDIRWNFEKFLVGPDGIPVMRWSHRATVSSVKTDILAYLKQFKTK.

An N-terminal signal peptide occupies residues 1–21 (MTTQLRVVHLLPLLLACFVQT). The active site involves Cys-73.

This sequence belongs to the glutathione peroxidase family. As to expression, epididymis.

The protein localises to the secreted. The enzyme catalyses 2 glutathione + H2O2 = glutathione disulfide + 2 H2O. In terms of biological role, protects cells and enzymes from oxidative damage, by catalyzing the reduction of hydrogen peroxide, lipid peroxides and organic hydroperoxide, by glutathione. May constitute a glutathione peroxidase-like protective system against peroxide damage in sperm membrane lipids. The sequence is that of Epididymal secretory glutathione peroxidase (GPX5) from Macaca fascicularis (Crab-eating macaque).